A 302-amino-acid chain; its full sequence is N-acetyl-D-glucosamine kinase (302 aa).

ATP-binding positions include 4–11 (GFDVGGTK) and 133–140 (GFGGGLVY). Residues His157, Cys177, Cys179, and Cys184 each coordinate Zn(2+).

The protein belongs to the ROK (NagC/XylR) family. NagK subfamily.

It carries out the reaction N-acetyl-D-glucosamine + ATP = N-acetyl-D-glucosamine 6-phosphate + ADP + H(+). It participates in cell wall biogenesis; peptidoglycan recycling. Functionally, catalyzes the phosphorylation of N-acetyl-D-glucosamine (GlcNAc) derived from cell-wall degradation, yielding GlcNAc-6-P. In Vibrio cholerae serotype O1 (strain ATCC 39315 / El Tor Inaba N16961), this protein is N-acetyl-D-glucosamine kinase.